The primary structure comprises 586 residues: Serine/threonine-protein phosphatase 2A 56 kDa regulatory subunit delta isoform (586 aa).

The segment at 1-80 is disordered; sequence MSPSPSSSGK…QSSSRFNLSK (80 aa). 6 tandem repeats follow at residues 21-22, 23-24, 25-26, 27-28, 29-30, and 31-32. The interval 21–36 is 8 X 2 AA approximate tandem repeats of Q-P; it reads QPQPQPQPQPQPQSQP. Positions 23 to 35 are enriched in pro residues; the sequence is QPQPQPQPQPQSQ. Residues 33–34 form a 7; approximate repeat; that stretch reads QS. Repeat 8 spans residues 35–36; it reads QP. The span at 36–45 shows a compositional bias: low complexity; the sequence is PPSSNKRPSN. Threonine 47 is subject to Phosphothreonine. 3 positions are modified to phosphoserine: serine 72, serine 73, and serine 74. An SH3-binding; class I motif is present at residues 507–514; the sequence is RAPPPLPP. The Nuclear localization signal motif lies at 532 to 549; the sequence is KRTVETEAVQMLKDIKKE. Serine 557 and serine 582 each carry phosphoserine.

This sequence belongs to the phosphatase 2A regulatory subunit B56 family. As to quaternary structure, PP2A consists of a common heterodimeric core enzyme, composed of a 36 kDa catalytic subunit (subunit C) and a 65 kDa constant regulatory subunit (PR65 or subunit A), that associates with a variety of regulatory subunits. Proteins that associate with the core dimer include three families of regulatory subunits B (the R2/B/PR55/B55, R3/B''/PR72/PR130/PR59 and R5/B'/B56 families), the 48 kDa variable regulatory subunit, viral proteins, and cell signaling molecules. Interacts with the PP2A A subunit PPP2R1A. Interacts with SGO1. Interacts with ADCY8. In terms of tissue distribution, highly expressed in brain.

Its subcellular location is the nucleus. The B regulatory subunit might modulate substrate selectivity and catalytic activity, and might also direct the localization of the catalytic enzyme to a particular subcellular compartment. The sequence is that of Serine/threonine-protein phosphatase 2A 56 kDa regulatory subunit delta isoform (PPP2R5D) from Oryctolagus cuniculus (Rabbit).